Reading from the N-terminus, the 338-residue chain is Glycerol-3-phosphate dehydrogenase [NAD(P)+] (338 aa).

NADPH-binding residues include S15, Y16, H36, and K110. The sn-glycerol 3-phosphate site is built by K110, G139, and T141. A143 contacts NADPH. Sn-glycerol 3-phosphate contacts are provided by K195, D248, S258, R259, and N260. K195 serves as the catalytic Proton acceptor. Residue R259 participates in NADPH binding. Residues V283 and E285 each contribute to the NADPH site.

This sequence belongs to the NAD-dependent glycerol-3-phosphate dehydrogenase family.

The protein localises to the cytoplasm. The enzyme catalyses sn-glycerol 3-phosphate + NAD(+) = dihydroxyacetone phosphate + NADH + H(+). It catalyses the reaction sn-glycerol 3-phosphate + NADP(+) = dihydroxyacetone phosphate + NADPH + H(+). It participates in membrane lipid metabolism; glycerophospholipid metabolism. Catalyzes the reduction of the glycolytic intermediate dihydroxyacetone phosphate (DHAP) to sn-glycerol 3-phosphate (G3P), the key precursor for phospholipid synthesis. The protein is Glycerol-3-phosphate dehydrogenase [NAD(P)+] of Edwardsiella ictaluri (strain 93-146).